The following is an 86-amino-acid chain: Weak neurotoxin 10 (86 aa).

The N-terminal stretch at 1–21 (MKTLLLTLVVVTIVCLDLGYT) is a signal peptide. 5 disulfides stabilise this stretch: Cys-24–Cys-45, Cys-27–Cys-32, Cys-38–Cys-63, Cys-67–Cys-78, and Cys-79–Cys-84.

It belongs to the three-finger toxin family. Ancestral subfamily. Orphan group II sub-subfamily. In terms of tissue distribution, expressed by the venom gland.

It localises to the secreted. Binds with low affinity to muscular (alpha-1-beta-1-delta-epsilon/CHRNA1-CHRNB1-CHRND-CHRNE) and very low affinity to neuronal (alpha-7/CHRNA7) nicotinic acetylcholine receptor (nAChR). This Naja sputatrix (Malayan spitting cobra) protein is Weak neurotoxin 10 (WNTX10).